A 550-amino-acid polypeptide reads, in one-letter code: Glucose-6-phosphate isomerase 2 (550 aa).

Catalysis depends on glutamate 359, which acts as the Proton donor. Active-site residues include histidine 390 and lysine 514.

It belongs to the GPI family.

The protein localises to the cytoplasm. It carries out the reaction alpha-D-glucose 6-phosphate = beta-D-fructose 6-phosphate. Its pathway is carbohydrate biosynthesis; gluconeogenesis. It participates in carbohydrate degradation; glycolysis; D-glyceraldehyde 3-phosphate and glycerone phosphate from D-glucose: step 2/4. Catalyzes the reversible isomerization of glucose-6-phosphate to fructose-6-phosphate. This is Glucose-6-phosphate isomerase 2 from Streptomyces avermitilis (strain ATCC 31267 / DSM 46492 / JCM 5070 / NBRC 14893 / NCIMB 12804 / NRRL 8165 / MA-4680).